Reading from the N-terminus, the 161-residue chain is uncharacterized protein (161 aa).

Disordered regions lie at residues Met1–Phe67 and Asp80–Gln147. Residues Asn84–Asn126 are compositionally biased toward low complexity. Residues Gly135–Gln147 are compositionally biased toward polar residues.

This is an uncharacterized protein from Dictyostelium discoideum (Social amoeba).